Consider the following 570-residue polypeptide: Urease subunit alpha (570 aa).

The 440-residue stretch at 131–570 folds into the Urease domain; it reads GGFDAHIHFI…LPMAQRYFLF (440 aa). Residues H136, H138, and K219 each coordinate Ni(2+). Position 219 is an N6-carboxylysine (K219). H221 contributes to the substrate binding site. H248 and H274 together coordinate Ni(2+). H322 serves as the catalytic Proton donor. Ni(2+) is bound at residue D362.

Belongs to the metallo-dependent hydrolases superfamily. Urease alpha subunit family. In terms of assembly, heterotrimer of UreA (gamma), UreB (beta) and UreC (alpha) subunits. Three heterotrimers associate to form the active enzyme. Ni cation serves as cofactor. Post-translationally, carboxylation allows a single lysine to coordinate two nickel ions.

The protein resides in the cytoplasm. The catalysed reaction is urea + 2 H2O + H(+) = hydrogencarbonate + 2 NH4(+). The protein operates within nitrogen metabolism; urea degradation; CO(2) and NH(3) from urea (urease route): step 1/1. This is Urease subunit alpha from Mesorhizobium japonicum (strain LMG 29417 / CECT 9101 / MAFF 303099) (Mesorhizobium loti (strain MAFF 303099)).